Here is a 636-residue protein sequence, read N- to C-terminus: Iron transport multicopper oxidase FET3 (636 aa).

Positions 1-21 are cleaved as a signal peptide; it reads MTNALLSIAVLLFSMLSLAQA. The Extracellular portion of the chain corresponds to 22–559; the sequence is ETHTFNWTTG…AFIPTGFTKK (538 aa). 3 N-linked (GlcNAc...) asparagine glycosylation sites follow: N27, N74, and N77. Plastocyanin-like domains follow at residues 32–146 and 157–301; these read WDYR…IKDD and SLSL…VYNK. 2 residues coordinate Cu cation: H81 and H83. N88 and N113 each carry an N-linked (GlcNAc...) asparagine glycan. Positions 126 and 128 each coordinate Cu cation. N194, N198, N244, N265, N292, N300, N359, and N381 each carry an N-linked (GlcNAc...) asparagine glycan. The Plastocyanin-like 3 domain maps to 362-502; sequence YTAPKVPTLM…GLGLVLVEDP (141 aa). Cu cation is bound by residues H413, H416, H418, H483, C484, H485, and H489. A helical transmembrane segment spans residues 560–584; that stretch reads GIIAMTFSCFAGILGIITIAIYGMM. Residues 585-636 lie on the Cytoplasmic side of the membrane; the sequence is DMEDATEKVIRDLHVDPEVLLNEVDENEERQVNEDRHSTEKHQFLTKAKRFF.

It belongs to the multicopper oxidase family. Cu cation is required as a cofactor.

Its subcellular location is the cell membrane. It catalyses the reaction 4 Fe(2+) + O2 + 4 H(+) = 4 Fe(3+) + 2 H2O. The enzyme catalyses 4 Cu(+) + O2 + 4 H(+) = 4 Cu(2+) + 2 H2O. Iron transport multicopper ferroxidase required for Fe(2+) ion high affinity uptake. Required to oxidize Fe(2+) to Fe(3+), which is then transported into the cell via the ferric iron permease FTR1. Essential component of copper-dependent iron transport. Also has cuprous oxidase activity. The chain is Iron transport multicopper oxidase FET3 (FET3) from Saccharomyces cerevisiae (strain ATCC 204508 / S288c) (Baker's yeast).